We begin with the raw amino-acid sequence, 213 residues long: Endonuclease III (213 aa).

In terms of domain architecture, HhH spans F108–N127. [4Fe-4S] cluster-binding residues include C187, C194, C197, and C203.

The protein belongs to the Nth/MutY family. It depends on [4Fe-4S] cluster as a cofactor.

The catalysed reaction is 2'-deoxyribonucleotide-(2'-deoxyribose 5'-phosphate)-2'-deoxyribonucleotide-DNA = a 3'-end 2'-deoxyribonucleotide-(2,3-dehydro-2,3-deoxyribose 5'-phosphate)-DNA + a 5'-end 5'-phospho-2'-deoxyribonucleoside-DNA + H(+). In terms of biological role, DNA repair enzyme that has both DNA N-glycosylase activity and AP-lyase activity. The DNA N-glycosylase activity releases various damaged pyrimidines from DNA by cleaving the N-glycosidic bond, leaving an AP (apurinic/apyrimidinic) site. The AP-lyase activity cleaves the phosphodiester bond 3' to the AP site by a beta-elimination, leaving a 3'-terminal unsaturated sugar and a product with a terminal 5'-phosphate. The protein is Endonuclease III of Rickettsia felis (strain ATCC VR-1525 / URRWXCal2) (Rickettsia azadi).